The primary structure comprises 330 residues: 4-hydroxythreonine-4-phosphate dehydrogenase (330 aa).

Residues H133 and T134 each contribute to the substrate site. H163, H208, and H263 together coordinate a divalent metal cation. Positions 271, 280, and 289 each coordinate substrate.

The protein belongs to the PdxA family. As to quaternary structure, homodimer. It depends on Zn(2+) as a cofactor. Requires Mg(2+) as cofactor. Co(2+) serves as cofactor.

It is found in the cytoplasm. It carries out the reaction 4-(phosphooxy)-L-threonine + NAD(+) = 3-amino-2-oxopropyl phosphate + CO2 + NADH. Its pathway is cofactor biosynthesis; pyridoxine 5'-phosphate biosynthesis; pyridoxine 5'-phosphate from D-erythrose 4-phosphate: step 4/5. Catalyzes the NAD(P)-dependent oxidation of 4-(phosphooxy)-L-threonine (HTP) into 2-amino-3-oxo-4-(phosphooxy)butyric acid which spontaneously decarboxylates to form 3-amino-2-oxopropyl phosphate (AHAP). The polypeptide is 4-hydroxythreonine-4-phosphate dehydrogenase (Azoarcus sp. (strain BH72)).